The chain runs to 56 residues: Large ribosomal subunit protein bL32 (56 aa).

The span at 1–16 (MAVQKSKKSRSMRGMR) shows a compositional bias: basic residues. The disordered stretch occupies residues 1–21 (MAVQKSKKSRSMRGMRRSHDA).

It belongs to the bacterial ribosomal protein bL32 family.

In Vibrio atlanticus (strain LGP32) (Vibrio splendidus (strain Mel32)), this protein is Large ribosomal subunit protein bL32.